An 869-amino-acid polypeptide reads, in one-letter code: Alanine--tRNA ligase (869 aa).

Zn(2+) contacts are provided by histidine 559, histidine 563, cysteine 660, and histidine 664.

This sequence belongs to the class-II aminoacyl-tRNA synthetase family. It depends on Zn(2+) as a cofactor.

It localises to the cytoplasm. The enzyme catalyses tRNA(Ala) + L-alanine + ATP = L-alanyl-tRNA(Ala) + AMP + diphosphate. In terms of biological role, catalyzes the attachment of alanine to tRNA(Ala) in a two-step reaction: alanine is first activated by ATP to form Ala-AMP and then transferred to the acceptor end of tRNA(Ala). Also edits incorrectly charged Ser-tRNA(Ala) and Gly-tRNA(Ala) via its editing domain. The chain is Alanine--tRNA ligase from Janthinobacterium sp. (strain Marseille) (Minibacterium massiliensis).